A 209-amino-acid chain; its full sequence is Thiamine-phosphate synthase (209 aa).

Residues 35 to 39 and asparagine 67 contribute to the 4-amino-2-methyl-5-(diphosphooxymethyl)pyrimidine site; that span reads QYRDK. Residues aspartate 68 and aspartate 86 each contribute to the Mg(2+) site. Position 105 (threonine 105) interacts with 4-amino-2-methyl-5-(diphosphooxymethyl)pyrimidine. 132–134 contributes to the 2-[(2R,5Z)-2-carboxy-4-methylthiazol-5(2H)-ylidene]ethyl phosphate binding site; it reads SNT. Lysine 135 lines the 4-amino-2-methyl-5-(diphosphooxymethyl)pyrimidine pocket. A 2-[(2R,5Z)-2-carboxy-4-methylthiazol-5(2H)-ylidene]ethyl phosphate-binding site is contributed by glycine 162.

The protein belongs to the thiamine-phosphate synthase family. Requires Mg(2+) as cofactor.

It carries out the reaction 2-[(2R,5Z)-2-carboxy-4-methylthiazol-5(2H)-ylidene]ethyl phosphate + 4-amino-2-methyl-5-(diphosphooxymethyl)pyrimidine + 2 H(+) = thiamine phosphate + CO2 + diphosphate. The catalysed reaction is 2-(2-carboxy-4-methylthiazol-5-yl)ethyl phosphate + 4-amino-2-methyl-5-(diphosphooxymethyl)pyrimidine + 2 H(+) = thiamine phosphate + CO2 + diphosphate. The enzyme catalyses 4-methyl-5-(2-phosphooxyethyl)-thiazole + 4-amino-2-methyl-5-(diphosphooxymethyl)pyrimidine + H(+) = thiamine phosphate + diphosphate. It functions in the pathway cofactor biosynthesis; thiamine diphosphate biosynthesis; thiamine phosphate from 4-amino-2-methyl-5-diphosphomethylpyrimidine and 4-methyl-5-(2-phosphoethyl)-thiazole: step 1/1. In terms of biological role, condenses 4-methyl-5-(beta-hydroxyethyl)thiazole monophosphate (THZ-P) and 2-methyl-4-amino-5-hydroxymethyl pyrimidine pyrophosphate (HMP-PP) to form thiamine monophosphate (TMP). The polypeptide is Thiamine-phosphate synthase (Pseudomonas fluorescens (strain SBW25)).